We begin with the raw amino-acid sequence, 315 residues long: MAIFKILVLLLSLCCFSQAQLSPTFYDQTCQNALSTIRSSIRTAISRERRMAASLIRLHFHDCFVNGCDASVMLVATPTMESERDSLANFQSARGFEVIDQAKSAVESVCPGVVSCADIIAVAARDASEYVGGPRYDVKVGRRDSTNAFRAIADRDLPNFRASLNDLSELFLRKGLNTRDLVALSGAHTLGQAQCLTFKGRLYDNSSDIDAGFSSTRKRRCPVNGGDTTLAPLDQVTPNSFDNNYYRNLMQKKGLLESDQVLFGTGASTDSIVTEYSRNPSRFASDFSAAMIKMGDIQTLTGSDGQIRRICSAVN.

The first 19 residues, 1–19, serve as a signal peptide directing secretion; that stretch reads MAIFKILVLLLSLCCFSQA. Gln-20 is modified (pyrrolidone carboxylic acid). Disulfide bonds link Cys-30/Cys-110, Cys-63/Cys-68, Cys-116/Cys-311, and Cys-195/Cys-221. His-61 acts as the Proton acceptor in catalysis. Positions 62, 65, 67, 69, and 71 each coordinate Ca(2+). Pro-158 is a substrate binding site. His-188 is a heme b binding site. Position 189 (Thr-189) interacts with Ca(2+). N-linked (GlcNAc...) asparagine glycosylation is present at Asn-205. Ca(2+) is bound by residues Asp-234, Thr-237, and Asp-242.

Belongs to the peroxidase family. Classical plant (class III) peroxidase subfamily. Heme b serves as cofactor. It depends on Ca(2+) as a cofactor.

It is found in the secreted. The enzyme catalyses 2 a phenolic donor + H2O2 = 2 a phenolic radical donor + 2 H2O. In terms of biological role, removal of H(2)O(2), oxidation of toxic reductants, biosynthesis and degradation of lignin, suberization, auxin catabolism, response to environmental stresses such as wounding, pathogen attack and oxidative stress. These functions might be dependent on each isozyme/isoform in each plant tissue. This is Peroxidase 4 (PER4) from Arabidopsis thaliana (Mouse-ear cress).